We begin with the raw amino-acid sequence, 333 residues long: Threonine-phosphate decarboxylase (333 aa).

Position 199 is an N6-(pyridoxal phosphate)lysine (Lys199).

It belongs to the class-I pyridoxal-phosphate-dependent aminotransferase family. Homodimer. The cofactor is pyridoxal 5'-phosphate.

It is found in the cytoplasm. The enzyme catalyses O-phospho-L-threonine + H(+) = (R)-1-aminopropan-2-yl phosphate + CO2. The protein operates within cofactor biosynthesis; adenosylcobalamin biosynthesis. Its function is as follows. Decarboxylates L-threonine-O-3-phosphate to yield (R)-1-amino-2-propanol O-2-phosphate, the precursor for the linkage between the nucleotide loop and the corrin ring in cobalamin. This Sinorhizobium sp protein is Threonine-phosphate decarboxylase (cobC).